Here is a 63-residue protein sequence, read N- to C-terminus: Alpha-toxin CsE5 (63 aa).

Residues 2 to 61 enclose the LCN-type CS-alpha/beta domain; the sequence is KDGYPVDSGNCKYECLKDDYCNDLCLERKADKGYCYWGKVSCYCYGLPDNSPTKTSGKCN. Cystine bridges form between Cys-12-Cys-60, Cys-16-Cys-36, Cys-22-Cys-43, and Cys-26-Cys-45.

It belongs to the long (4 C-C) scorpion toxin superfamily. Sodium channel inhibitor family. Alpha subfamily. Expressed by the venom gland.

The protein resides in the secreted. In terms of biological role, alpha toxins bind voltage-independently at site-3 of sodium channels (Nav) and inhibit the inactivation of the activated channels, thereby blocking neuronal transmission. This Centruroides sculpturatus (Arizona bark scorpion) protein is Alpha-toxin CsE5.